We begin with the raw amino-acid sequence, 243 residues long: Uridylate kinase (243 aa).

Position 18-21 (18-21 (KLGG)) interacts with ATP. Position 59 (glycine 59) interacts with UMP. Residues glycine 60 and arginine 64 each contribute to the ATP site. UMP contacts are provided by residues aspartate 79 and 140-147 (MGMPYFST). Tyrosine 173 and aspartate 176 together coordinate ATP.

Belongs to the UMP kinase family. In terms of assembly, homohexamer.

It is found in the cytoplasm. The enzyme catalyses UMP + ATP = UDP + ADP. The protein operates within pyrimidine metabolism; CTP biosynthesis via de novo pathway; UDP from UMP (UMPK route): step 1/1. Inhibited by UTP. In terms of biological role, catalyzes the reversible phosphorylation of UMP to UDP. This Corynebacterium efficiens (strain DSM 44549 / YS-314 / AJ 12310 / JCM 11189 / NBRC 100395) protein is Uridylate kinase.